A 428-amino-acid polypeptide reads, in one-letter code: Adenylosuccinate synthetase (428 aa).

GTP is bound by residues 12-18 and 40-42; these read GDEGKGK and GHT. D13 (proton acceptor) is an active-site residue. D13 and G40 together coordinate Mg(2+). Residues 13 to 16, 38 to 41, T127, R141, Q222, T237, and R301 each bind IMP; these read DEGK and NAGH. H41 serves as the catalytic Proton donor. 297–303 contributes to the substrate binding site; the sequence is TVTKRPR. Residues R303, 329-331, and 411-413 contribute to the GTP site; these read CLD and SVG.

It belongs to the adenylosuccinate synthetase family. As to quaternary structure, homodimer. Mg(2+) is required as a cofactor.

The protein resides in the cytoplasm. The enzyme catalyses IMP + L-aspartate + GTP = N(6)-(1,2-dicarboxyethyl)-AMP + GDP + phosphate + 2 H(+). Its pathway is purine metabolism; AMP biosynthesis via de novo pathway; AMP from IMP: step 1/2. Functionally, plays an important role in the de novo pathway of purine nucleotide biosynthesis. Catalyzes the first committed step in the biosynthesis of AMP from IMP. In Levilactobacillus brevis (strain ATCC 367 / BCRC 12310 / CIP 105137 / JCM 1170 / LMG 11437 / NCIMB 947 / NCTC 947) (Lactobacillus brevis), this protein is Adenylosuccinate synthetase.